Consider the following 916-residue polypeptide: Major intrinsically disordered Notch2-binding receptor 1 (916 aa).

Residues 1-891 (METSQETSLF…AEFRRAKVCK (891 aa)) lie on the Cytoplasmic side of the membrane. Disordered regions lie at residues 390–409 (EEKLHYPNASSQTPNFPAPE), 553–591 (KSDCDSSPEHNLTKIANGVPNSKGDKGNRPENTHHSEEE), 648–675 (SLTSEGPSDDSASPRMFHAHSGSHGPKL), 705–726 (TRPSSRSLTEENSATESKIASI), and 745–782 (NEEEIKDTGPGDNKDWHRKSKEADRQYDIPPQHRLPKQ). Basic and acidic residues-rich tracts occupy residues 553-564 (KSDCDSSPEHNL) and 575-591 (KGDKGNRPENTHHSEEE). Serine 711 carries the phosphoserine modification. Basic and acidic residues predominate over residues 750-771 (KDTGPGDNKDWHRKSKEADRQY). A helical transmembrane segment spans residues 892 to 912 (IAALIAAAACTVILVIVVPIC). The Extracellular segment spans residues 913–916 (TMKS).

Belongs to the MINAR family. Interacts with NOTCH2; this interaction increases MINAR1 stability. Interacts (via N-terminus) with DEPTOR (via PDZ domain); this interaction may stabilize DEPTOR protein by impairing its ubiquitination. In terms of tissue distribution, widely expressed, including in breast epithelial cells and endothelial cells (at protein level). Expression is down-regulated in advanced breast tumors (at protein level).

It is found in the cell membrane. Intrinsically disordered protein which may negatively regulate mTOR signaling pathway by stabilizing the mTOR complex component DEPTOR. Negatively regulates angiogenesis. Negatively regulates cell growth. Negatively regulates neurite outgrowth in hippocampal neurons. The protein is Major intrinsically disordered Notch2-binding receptor 1 of Homo sapiens (Human).